A 108-amino-acid chain; its full sequence is UPF0145 protein LCABL_07110 (108 aa).

This sequence belongs to the UPF0145 family.

This Lacticaseibacillus casei (strain BL23) (Lactobacillus casei) protein is UPF0145 protein LCABL_07110.